A 513-amino-acid polypeptide reads, in one-letter code: Putative zinc finger CCCH domain-containing protein 51 (513 aa).

The tract at residues 155–180 (SMPRNSPNAGRNLVGHPHSSSKSSSK) is disordered. Over residues 170 to 180 (HPHSSSKSSSK) the composition is skewed to low complexity. The segment at 176 to 204 (KSSSKPCHFHFFRGYCKKGVNCQFFHGSV) adopts a C3H1-type zinc-finger fold. The HTH OST-type domain occupies 218–299 (SLSKLDMEIR…HGQYHVVLVE (82 aa)). Positions 325-411 (NQIYMTFPVH…SELRMTWLKS (87 aa)) constitute an RRM domain.

In Oryza sativa subsp. japonica (Rice), this protein is Putative zinc finger CCCH domain-containing protein 51.